Consider the following 101-residue polypeptide: NAD(P)H-quinone oxidoreductase subunit 4L, chloroplastic (101 aa).

The next 3 helical transmembrane spans lie at 2–22 (IFQSYLLIAASMFCIGLYGLL), 32–52 (MSLELLLNAVNLNLLTFSNFV), and 61–81 (VLALFVIALAAAEAAIGLAII).

It belongs to the complex I subunit 4L family. In terms of assembly, NDH is composed of at least 16 different subunits, 5 of which are encoded in the nucleus.

The protein resides in the plastid. The protein localises to the chloroplast thylakoid membrane. The catalysed reaction is a plastoquinone + NADH + (n+1) H(+)(in) = a plastoquinol + NAD(+) + n H(+)(out). The enzyme catalyses a plastoquinone + NADPH + (n+1) H(+)(in) = a plastoquinol + NADP(+) + n H(+)(out). In terms of biological role, NDH shuttles electrons from NAD(P)H:plastoquinone, via FMN and iron-sulfur (Fe-S) centers, to quinones in the photosynthetic chain and possibly in a chloroplast respiratory chain. The immediate electron acceptor for the enzyme in this species is believed to be plastoquinone. Couples the redox reaction to proton translocation, and thus conserves the redox energy in a proton gradient. This is NAD(P)H-quinone oxidoreductase subunit 4L, chloroplastic from Nephroselmis olivacea (Green alga).